The chain runs to 283 residues: Thymidylate synthase (283 aa).

R22 is a binding site for dUMP. Catalysis depends on C160, which acts as the Nucleophile. DUMP-binding positions include 180–183 (RSCD), N191, and 221–223 (HIY). D183 serves as a coordination point for (6R)-5,10-methylene-5,6,7,8-tetrahydrofolate. (6R)-5,10-methylene-5,6,7,8-tetrahydrofolate is bound at residue S282.

Belongs to the thymidylate synthase family. Bacterial-type ThyA subfamily. Homodimer.

It localises to the cytoplasm. It carries out the reaction dUMP + (6R)-5,10-methylene-5,6,7,8-tetrahydrofolate = 7,8-dihydrofolate + dTMP. It participates in pyrimidine metabolism; dTTP biosynthesis. Functionally, catalyzes the reductive methylation of 2'-deoxyuridine-5'-monophosphate (dUMP) to 2'-deoxythymidine-5'-monophosphate (dTMP) while utilizing 5,10-methylenetetrahydrofolate (mTHF) as the methyl donor and reductant in the reaction, yielding dihydrofolate (DHF) as a by-product. This enzymatic reaction provides an intracellular de novo source of dTMP, an essential precursor for DNA biosynthesis. In Haemophilus influenzae (strain PittEE), this protein is Thymidylate synthase.